A 555-amino-acid chain; its full sequence is Dihydroxy-acid dehydratase (555 aa).

Asp78 contributes to the Mg(2+) binding site. Cys119 contacts [2Fe-2S] cluster. Residues Asp120 and Lys121 each coordinate Mg(2+). Residue Lys121 is modified to N6-carboxylysine. A [2Fe-2S] cluster-binding site is contributed by Cys195. Glu444 lines the Mg(2+) pocket. Ser470 (proton acceptor) is an active-site residue.

The protein belongs to the IlvD/Edd family. As to quaternary structure, homodimer. It depends on [2Fe-2S] cluster as a cofactor. Requires Mg(2+) as cofactor.

The enzyme catalyses (2R)-2,3-dihydroxy-3-methylbutanoate = 3-methyl-2-oxobutanoate + H2O. It catalyses the reaction (2R,3R)-2,3-dihydroxy-3-methylpentanoate = (S)-3-methyl-2-oxopentanoate + H2O. It functions in the pathway amino-acid biosynthesis; L-isoleucine biosynthesis; L-isoleucine from 2-oxobutanoate: step 3/4. Its pathway is amino-acid biosynthesis; L-valine biosynthesis; L-valine from pyruvate: step 3/4. Functions in the biosynthesis of branched-chain amino acids. Catalyzes the dehydration of (2R,3R)-2,3-dihydroxy-3-methylpentanoate (2,3-dihydroxy-3-methylvalerate) into 2-oxo-3-methylpentanoate (2-oxo-3-methylvalerate) and of (2R)-2,3-dihydroxy-3-methylbutanoate (2,3-dihydroxyisovalerate) into 2-oxo-3-methylbutanoate (2-oxoisovalerate), the penultimate precursor to L-isoleucine and L-valine, respectively. The sequence is that of Dihydroxy-acid dehydratase from Dehalococcoides mccartyi (strain ATCC BAA-2266 / KCTC 15142 / 195) (Dehalococcoides ethenogenes (strain 195)).